Here is a 545-residue protein sequence, read N- to C-terminus: Chaperonin GroEL 2 (545 aa).

ATP is bound by residues T30–P33, K51, D87–T91, G415, N479–A481, and D495.

The protein belongs to the chaperonin (HSP60) family. Forms a cylinder of 14 subunits composed of two heptameric rings stacked back-to-back. Interacts with the co-chaperonin GroES.

The protein resides in the cytoplasm. The enzyme catalyses ATP + H2O + a folded polypeptide = ADP + phosphate + an unfolded polypeptide.. Its function is as follows. Together with its co-chaperonin GroES, plays an essential role in assisting protein folding. The GroEL-GroES system forms a nano-cage that allows encapsulation of the non-native substrate proteins and provides a physical environment optimized to promote and accelerate protein folding. This chain is Chaperonin GroEL 2, found in Escherichia coli O1:K1 / APEC.